Consider the following 262-residue polypeptide: Cap-specific mRNA (nucleoside-2'-O-)-methyltransferase (262 aa).

A RrmJ-type SAM-dependent 2'-O-MTase domain is found at 34–226; the sequence is TRRPRCWRKL…ERYLICFNKL (193 aa). Gly67 and Asp140 together coordinate S-adenosyl-L-methionine. Lys180 (proton acceptor) is an active-site residue.

It carries out the reaction a 5'-end (N(7)-methyl 5'-triphosphoguanosine)-ribonucleoside in mRNA + S-adenosyl-L-methionine = a 5'-end (N(7)-methyl 5'-triphosphoguanosine)-(2'-O-methyl-ribonucleoside) in mRNA + S-adenosyl-L-homocysteine + H(+). Its function is as follows. S-adenosyl-L-methionine-dependent methyltransferase that mediates mRNA cap 2'-O-ribose methylation to the 5'-cap structure of late viral transcripts. This is Cap-specific mRNA (nucleoside-2'-O-)-methyltransferase from Lepidoptera (butterflies and moths).